Here is an 834-residue protein sequence, read N- to C-terminus: Leucine--tRNA ligase (834 aa).

A 'HIGH' region motif is present at residues 40–50 (PYPSGNIHMGH). The 'KMSKS' region motif lies at 586 to 590 (KMSKS). Residue lysine 589 coordinates ATP.

Belongs to the class-I aminoacyl-tRNA synthetase family.

It is found in the cytoplasm. It carries out the reaction tRNA(Leu) + L-leucine + ATP = L-leucyl-tRNA(Leu) + AMP + diphosphate. The protein is Leucine--tRNA ligase of Nitratidesulfovibrio vulgaris (strain DSM 19637 / Miyazaki F) (Desulfovibrio vulgaris).